Here is a 323-residue protein sequence, read N- to C-terminus: Dof zinc finger protein DOF3.6 (323 aa).

The segment at 76 to 130 (LNCPRCDSTNTKFCYFNNYSLTQPRHFCKTCRRYWTRGGSLRNVPVGGGFRRNKR) adopts a Dof-type zinc-finger fold. Residues Cys78, Cys81, Cys103, and Cys106 each contribute to the Zn(2+) site. Disordered regions lie at residues 121 to 160 (VGGGFRRNKRSKSRSKSTVVVSTDNTTSTSSLTSRPSYSN) and 304 to 323 (GGNSSWTGFTSNNSTGHLSF). Positions 126–135 (RRNKRSKSRS) are enriched in basic residues. Positions 136–159 (KSTVVVSTDNTTSTSSLTSRPSYS) are enriched in low complexity.

As to quaternary structure, interacts with OBF4. Predominantly expressed in roots.

It localises to the nucleus. Functionally, transcription factor that binds specifically to a 5'-AA[AG]G-3' consensus core sequence. Enhances the DNA binding of OBF transcription factors to OCS elements. The polypeptide is Dof zinc finger protein DOF3.6 (DOF3.6) (Arabidopsis thaliana (Mouse-ear cress)).